A 209-amino-acid polypeptide reads, in one-letter code: Ribosomal RNA large subunit methyltransferase E (209 aa).

S-adenosyl-L-methionine contacts are provided by glycine 63, tryptophan 65, aspartate 83, aspartate 99, and aspartate 124. Lysine 164 acts as the Proton acceptor in catalysis.

It belongs to the class I-like SAM-binding methyltransferase superfamily. RNA methyltransferase RlmE family.

The protein localises to the cytoplasm. It carries out the reaction uridine(2552) in 23S rRNA + S-adenosyl-L-methionine = 2'-O-methyluridine(2552) in 23S rRNA + S-adenosyl-L-homocysteine + H(+). Functionally, specifically methylates the uridine in position 2552 of 23S rRNA at the 2'-O position of the ribose in the fully assembled 50S ribosomal subunit. The sequence is that of Ribosomal RNA large subunit methyltransferase E from Baumannia cicadellinicola subsp. Homalodisca coagulata.